A 152-amino-acid polypeptide reads, in one-letter code: Large ribosomal subunit protein bL9 (152 aa).

This sequence belongs to the bacterial ribosomal protein bL9 family.

Functionally, binds to the 23S rRNA. This chain is Large ribosomal subunit protein bL9, found in Streptococcus thermophilus (strain ATCC BAA-491 / LMD-9).